The chain runs to 389 residues: S-adenosylmethionine synthase (389 aa).

His-17 serves as a coordination point for ATP. Asp-19 serves as a coordination point for Mg(2+). Residue Glu-45 coordinates K(+). Glu-58 and Gln-101 together coordinate L-methionine. Residues 101-111 are flexible loop; sequence QSPDISQGVDG. ATP is bound by residues 170–172, 237–238, Asp-246, 252–253, Ala-269, and Lys-273; these read DSK, RF, and RK. Residue Asp-246 participates in L-methionine binding. Lys-277 lines the L-methionine pocket.

Belongs to the AdoMet synthase family. In terms of assembly, homotetramer; dimer of dimers. Mg(2+) serves as cofactor. It depends on K(+) as a cofactor.

The protein localises to the cytoplasm. The catalysed reaction is L-methionine + ATP + H2O = S-adenosyl-L-methionine + phosphate + diphosphate. The protein operates within amino-acid biosynthesis; S-adenosyl-L-methionine biosynthesis; S-adenosyl-L-methionine from L-methionine: step 1/1. Catalyzes the formation of S-adenosylmethionine (AdoMet) from methionine and ATP. The overall synthetic reaction is composed of two sequential steps, AdoMet formation and the subsequent tripolyphosphate hydrolysis which occurs prior to release of AdoMet from the enzyme. The chain is S-adenosylmethionine synthase from Treponema denticola (strain ATCC 35405 / DSM 14222 / CIP 103919 / JCM 8153 / KCTC 15104).